The chain runs to 566 residues: Glucose starvation modulator protein 1 (566 aa).

The segment at residues 20–48 is a DNA-binding region (zn(2)-C6 fungal-type); sequence CVFCHQKHLQCSNERPCKNCVKRNIAHGC. Disordered stretches follow at residues 65–93 and 250–270; these read PGAVSNKQSTPRKKLKTGPVSTSVSPMDS and KQASPSPSNTSTSENNTNTLS. Over residues 83-93 the composition is skewed to polar residues; it reads PVSTSVSPMDS. Low complexity predominate over residues 253–270; the sequence is SPSPSNTSTSENNTNTLS.

This sequence belongs to the ERT1/acuK family.

It is found in the nucleus. Transcription factor which regulates nonfermentable carbon utilization. This chain is Glucose starvation modulator protein 1 (ZCF23), found in Candida albicans (strain SC5314 / ATCC MYA-2876) (Yeast).